The chain runs to 396 residues: ATP-dependent RNA helicase eIF4A (396 aa).

The segment at 1–20 (MADKGLEDVPEGQIESNYDE) is disordered. A Q motif motif is present at residues 23-51 (DSFDAMNLKAELLRGVYAYGFERPSAIQQ). One can recognise a Helicase ATP-binding domain in the interval 54-224 (IMPVIKGHDV…TKFMRDPVRI (171 aa)). 67–74 (AQSGTGKT) is an ATP binding site. Positions 172-175 (DEAD) match the DEAD box motif. The region spanning 235–396 (GIKQFYIAVE…EMPMNVADLI (162 aa)) is the Helicase C-terminal domain.

This sequence belongs to the DEAD box helicase family. eIF4A subfamily. In terms of assembly, component of the eIF4F complex, which composition varies with external and internal environmental conditions. It is composed of at least eIF4A, eIF4E and eIF4G.

It is found in the cytoplasm. The enzyme catalyses ATP + H2O = ADP + phosphate + H(+). Functionally, ATP-dependent RNA helicase which is a subunit of the eIF4F complex involved in cap recognition and is required for mRNA binding to ribosome. In the current model of translation initiation, eIF4A unwinds RNA secondary structures in the 5'-UTR of mRNAs which is necessary to allow efficient binding of the small ribosomal subunit, and subsequent scanning for the initiator codon. This Phaeosphaeria nodorum (strain SN15 / ATCC MYA-4574 / FGSC 10173) (Glume blotch fungus) protein is ATP-dependent RNA helicase eIF4A (TIF1).